Reading from the N-terminus, the 120-residue chain is Large ribosomal subunit protein uL18 (120 aa).

It belongs to the universal ribosomal protein uL18 family. In terms of assembly, part of the 50S ribosomal subunit. Part of the 5S rRNA/L5/L18/L25 subcomplex. Contacts the 23S rRNA and 5S rRNA. Required for catalysis of RNase M5.

Its function is as follows. This is one of the proteins that bind and probably mediate the attachment of the 5S RNA into the large ribosomal subunit, where it forms part of the central protuberance. Functionally, required for correct processing of both the 5' and 3' ends of 5S rRNA precursor, which is does in conjunction with ribonuclease M5 (RNase M5, rnmV). Possibly folds the 5S rRNA precursor into the correct conformation, thus acting as a chaperone. The sequence is that of Large ribosomal subunit protein uL18 from Bacillus subtilis (strain 168).